A 142-amino-acid chain; its full sequence is Large ribosomal subunit protein uL11 (142 aa).

It belongs to the universal ribosomal protein uL11 family. As to quaternary structure, part of the ribosomal stalk of the 50S ribosomal subunit. Interacts with L10 and the large rRNA to form the base of the stalk. L10 forms an elongated spine to which L12 dimers bind in a sequential fashion forming a multimeric L10(L12)X complex. In terms of processing, one or more lysine residues are methylated.

Functionally, forms part of the ribosomal stalk which helps the ribosome interact with GTP-bound translation factors. The chain is Large ribosomal subunit protein uL11 from Mesorhizobium japonicum (strain LMG 29417 / CECT 9101 / MAFF 303099) (Mesorhizobium loti (strain MAFF 303099)).